A 308-amino-acid polypeptide reads, in one-letter code: UDP-N-acetylenolpyruvoylglucosamine reductase 2 (308 aa).

Residues 31–197 (RIGGPADYLV…AEVVMALRPA (167 aa)) form the FAD-binding PCMH-type domain. The active site involves R176. Catalysis depends on S226, which acts as the Proton donor. E296 is an active-site residue.

This sequence belongs to the MurB family. FAD serves as cofactor.

The protein localises to the cytoplasm. It carries out the reaction UDP-N-acetyl-alpha-D-muramate + NADP(+) = UDP-N-acetyl-3-O-(1-carboxyvinyl)-alpha-D-glucosamine + NADPH + H(+). It functions in the pathway cell wall biogenesis; peptidoglycan biosynthesis. Functionally, cell wall formation. The protein is UDP-N-acetylenolpyruvoylglucosamine reductase 2 of Symbiobacterium thermophilum (strain DSM 24528 / JCM 14929 / IAM 14863 / T).